A 193-amino-acid chain; its full sequence is Cysteine and glycine-rich protein 1 (193 aa).

Positions 10 to 61 constitute an LIM zinc-binding 1 domain; sequence CGVCQKTVYFAEEVQCEGNSFHKSCFLCMVCKKNLDSTTVAVHGEEIYCKSC. Positions 64 to 69 match the Nuclear localization signal motif; sequence KKYGPK. The residue at position 81 (Ser81) is a Phosphoserine. Lys84 is modified (N6-acetyllysine). Lys91 is covalently cross-linked (Glycyl lysine isopeptide (Lys-Gly) (interchain with G-Cter in SUMO2)). Lys112, Lys131, Lys137, and Lys161 each carry N6-acetyllysine. Positions 119 to 170 constitute an LIM zinc-binding 2 domain; the sequence is CPRCSQAVYAAEKVIGAGKSWHKSCFRCAKCGKGLESTTLADKDGEIYCKGC. Residue Ser192 is modified to Phosphoserine.

Interacts with ASCC1; ASCC2 and TRIP4.

The protein localises to the nucleus. Its function is as follows. Could play a role in neuronal development. In Rattus norvegicus (Rat), this protein is Cysteine and glycine-rich protein 1 (Csrp1).